A 313-amino-acid chain; its full sequence is uncharacterized protein (313 aa).

This sequence to M.jannaschii MJ0977 C-terminal region.

This is an uncharacterized protein from Methanocaldococcus jannaschii (strain ATCC 43067 / DSM 2661 / JAL-1 / JCM 10045 / NBRC 100440) (Methanococcus jannaschii).